The sequence spans 208 residues: V-type ATP synthase subunit D (208 aa).

This sequence belongs to the V-ATPase D subunit family.

Produces ATP from ADP in the presence of a proton gradient across the membrane. The sequence is that of V-type ATP synthase subunit D from Chlamydia felis (strain Fe/C-56) (Chlamydophila felis).